Consider the following 648-residue polypeptide: TBC1 domain family member 17 (648 aa).

The tract at residues 218–309 is required for interaction with OPTN; the sequence is DPYSTTFSSF…PELKNRIFSG (92 aa). The tract at residues 240 to 259 is disordered; that stretch reads PQPEGAASDLPPPPDDEPEP. The region spanning 310-520 is the Rab-GAP TBC domain; sequence GLSPSLRREA…RLWEVLWTGL (211 aa). The tract at residues 594-648 is disordered; the sequence is LAPPAEPHSPSPTASPLPLSPTRAPPTPPPSTDTAPQPDSSLEILPEEEDEGADS. Pro residues predominate over residues 597–624; the sequence is PAEPHSPSPTASPLPLSPTRAPPTPPPS. Residues serine 602 and serine 604 each carry the phosphoserine modification. The residue at position 606 (threonine 606) is a Phosphothreonine. Serine 608 carries the post-translational modification Phosphoserine. Threonine 615 carries the post-translational modification Phosphothreonine. The segment covering 625–634 has biased composition (low complexity); sequence TDTAPQPDSS. The segment covering 638–648 has biased composition (acidic residues); sequence LPEEEDEGADS.

In terms of assembly, interacts with OPTN; this interaction mediates TBC1D17 transient association with Rab8.

It localises to the cytoplasmic vesicle. The protein resides in the autophagosome. The protein localises to the cytoplasm. It is found in the recycling endosome. Functionally, probable RAB GTPase-activating protein that inhibits RAB8A/B function. Reduces Rab8 recruitment to tubules emanating from the endocytic recycling compartment (ERC) and inhibits Rab8-mediated endocytic trafficking, such as that of transferrin receptor (TfR). Involved in regulation of autophagy. This Homo sapiens (Human) protein is TBC1 domain family member 17.